The chain runs to 1189 residues: Pesticidal crystal protein Cry1Ca (1189 aa).

This sequence belongs to the delta endotoxin family.

In terms of biological role, promotes colloidosmotic lysis by binding to the midgut epithelial cells of many lepidopteran larvae including Spodoptera species. This is Pesticidal crystal protein Cry1Ca (cry1Ca) from Bacillus thuringiensis subsp. entomocidus.